Consider the following 255-residue polypeptide: Small ribosomal subunit protein eS1 (255 aa).

Residues 1–18 are compositionally biased toward basic residues; sequence MAVGKNKRLSKGKKGLKK. The disordered stretch occupies residues 1–28; the sequence is MAVGKNKRLSKGKKGLKKRTQDPFSRKD. Position 2 is an N-acetylalanine; partial (Ala-2). A compositionally biased stretch (basic and acidic residues) spans 19 to 28; the sequence is RTQDPFSRKD.

Belongs to the eukaryotic ribosomal protein eS1 family. In terms of assembly, component of the small ribosomal subunit. Mature ribosomes consist of a small (40S) and a large (60S) subunit. The 40S subunit contains about 33 different proteins and 1 molecule of RNA (18S). The 60S subunit contains about 49 different proteins and 3 molecules of RNA (25S, 5.8S and 5S).

It localises to the cytoplasm. This is Small ribosomal subunit protein eS1 from Ajellomyces capsulatus (strain NAm1 / WU24) (Darling's disease fungus).